Here is a 75-residue protein sequence, read N- to C-terminus: Translational regulator CsrA (75 aa).

This sequence belongs to the CsrA/RsmA family. In terms of assembly, homodimer; the beta-strands of each monomer intercalate to form a hydrophobic core, while the alpha-helices form wings that extend away from the core.

It is found in the cytoplasm. In terms of biological role, a translational regulator that binds mRNA to regulate translation initiation and/or mRNA stability. Usually binds in the 5'-UTR at or near the Shine-Dalgarno sequence preventing ribosome-binding, thus repressing translation. Its main target seems to be the major flagellin gene, while its function is anatagonized by FliW. The sequence is that of Translational regulator CsrA from Acetivibrio thermocellus (strain ATCC 27405 / DSM 1237 / JCM 9322 / NBRC 103400 / NCIMB 10682 / NRRL B-4536 / VPI 7372) (Clostridium thermocellum).